A 334-amino-acid polypeptide reads, in one-letter code: Gap junction alpha-2 protein (334 aa).

At 1–12 the chain is on the cytoplasmic side; sequence MAGWELLKLLLD. A helical transmembrane segment spans residues 13-35; the sequence is DVQEHSTLIGKVWLTVLFIFRIF. Residues 36 to 75 lie on the Extracellular side of the membrane; the sequence is ILSVAGESVWTDEQSDFICNTQQPGCTNVCYDQAFPISHV. Residues 76–98 traverse the membrane as a helical segment; it reads RYWVLQFLFVSTPTLIYLGHMVY. Topologically, residues 99–153 are cytoplasmic; it reads LSKKEEKERQKENESRILVANEAQTEVHSSATKKIRIQGPLMCTYTTSVVFKSIF. Residues 154-176 traverse the membrane as a helical segment; that stretch reads EAGFLLGQWYIYGFVMSPIFVCE. The Extracellular portion of the chain corresponds to 177 to 207; that stretch reads RIPCKHKVECFVSRPMEKTIFIIFMLVVSLI. A helical transmembrane segment spans residues 208–230; that stretch reads SLLLNLMELIHLSFKCFQHGIKE. Residues 231 to 334 are Cytoplasmic-facing; it reads GATCSPTGIP…HQTSSKQQYV (104 aa).

The protein belongs to the connexin family. Alpha-type (group II) subfamily. As to quaternary structure, a connexon is composed of a hexamer of connexins. As to expression, resides primarily in the ovary, oocytes and early embryos.

The protein localises to the cell membrane. The protein resides in the cell junction. Its subcellular location is the gap junction. Its function is as follows. One gap junction consists of a cluster of closely packed pairs of transmembrane channels, the connexons, through which materials of low MW diffuse from one cell to a neighboring cell. In Xenopus laevis (African clawed frog), this protein is Gap junction alpha-2 protein (gja2).